The sequence spans 890 residues: DNA mismatch repair protein MutS (890 aa).

Residues 1–13 (MDKGINLQNDKEP) are compositionally biased toward basic and acidic residues. A disordered region spans residues 1–23 (MDKGINLQNDKEPSPMAEGNPAD). Position 649 to 656 (649 to 656 (GPNMGGKS)) interacts with ATP.

This sequence belongs to the DNA mismatch repair MutS family.

Its function is as follows. This protein is involved in the repair of mismatches in DNA. It is possible that it carries out the mismatch recognition step. This protein has a weak ATPase activity. The sequence is that of DNA mismatch repair protein MutS from Paracidovorax citrulli (strain AAC00-1) (Acidovorax citrulli).